Reading from the N-terminus, the 223-residue chain is Probable transaldolase (223 aa).

Lysine 83 (schiff-base intermediate with substrate) is an active-site residue.

Belongs to the transaldolase family. Type 3B subfamily.

It is found in the cytoplasm. It catalyses the reaction D-sedoheptulose 7-phosphate + D-glyceraldehyde 3-phosphate = D-erythrose 4-phosphate + beta-D-fructose 6-phosphate. It functions in the pathway carbohydrate degradation; pentose phosphate pathway; D-glyceraldehyde 3-phosphate and beta-D-fructose 6-phosphate from D-ribose 5-phosphate and D-xylulose 5-phosphate (non-oxidative stage): step 2/3. Transaldolase is important for the balance of metabolites in the pentose-phosphate pathway. The polypeptide is Probable transaldolase (Myxococcus xanthus (strain DK1622)).